Reading from the N-terminus, the 250-residue chain is Diaminopimelate epimerase (250 aa).

Residues Asn-11 and Asn-60 each contribute to the substrate site. The active-site Proton donor is the Cys-69. Substrate is bound by residues 70–71 (GN), Asn-164, and 182–183 (ER). Catalysis depends on Cys-192, which acts as the Proton acceptor. 193–194 (GT) is a binding site for substrate.

This sequence belongs to the diaminopimelate epimerase family. In terms of assembly, homodimer.

It localises to the cytoplasm. The catalysed reaction is (2S,6S)-2,6-diaminopimelate = meso-2,6-diaminopimelate. It participates in amino-acid biosynthesis; L-lysine biosynthesis via DAP pathway; DL-2,6-diaminopimelate from LL-2,6-diaminopimelate: step 1/1. In terms of biological role, catalyzes the stereoinversion of LL-2,6-diaminopimelate (L,L-DAP) to meso-diaminopimelate (meso-DAP), a precursor of L-lysine and an essential component of the bacterial peptidoglycan. The sequence is that of Diaminopimelate epimerase from Nitratiruptor sp. (strain SB155-2).